The primary structure comprises 284 residues: CBY1-interacting BAR domain-containing protein 1-A (284 aa).

The transit peptide at 1-48 directs the protein to the mitochondrion; sequence MSQTPEARARDNQTRQIQESVNNVEKHFGELCQIFAGYVRKTARLRDK. The segment at 11–221 is BAR-like; sequence DNQTRQIQES…DIDEEEDLEV (211 aa). Coiled-coil stretches lie at residues 142-184 and 260-284; these read RQII…IKKL and NRQK…EDEN. Positions 242–261 are enriched in polar residues; sequence SRTGSTSRGPSVISQPPGNR. The segment at 242–284 is disordered; the sequence is SRTGSTSRGPSVISQPPGNRQKNRIEDEDEEEEDDENSTEDEN. Positions 267–284 are enriched in acidic residues; it reads EDEDEEEEDDENSTEDEN.

It belongs to the CIBAR family.

It localises to the cytoplasm. It is found in the cytoskeleton. The protein localises to the microtubule organizing center. The protein resides in the centrosome. Its subcellular location is the centriole. It localises to the nucleus. It is found in the mitochondrion inner membrane. The protein localises to the cell projection. The protein resides in the cilium. Its subcellular location is the flagellum. Functionally, plays a critical role in regulating mitochondrial ultrastructure and function by maintaining the integrity of mitochondrial morphology, particularly the organization of cristae. Plays a crucial role in ciliogenesis. Plays a key role in the correct positioning of the annulus, a septin-based ring structure in the sperm flagellum, serving both as a physical barrier and a membrane diffusion barrier that separates the midpiece (MP) from the principal piece (PP). In Xenopus laevis (African clawed frog), this protein is CBY1-interacting BAR domain-containing protein 1-A.